The following is a 678-amino-acid chain: NADPH--cytochrome P450 reductase (678 aa).

Residues 1–21 (MADSNMDAGTTTSEMVAEEVS) lie on the Lumenal side of the membrane. Residues 22–42 (LFSTTDVILFSLIVGVMTYWF) form a helical membrane-spanning segment. At 43-678 (LFRKKKEEVP…KGRYSLDVWS (636 aa)) the chain is on the cytoplasmic side. Ser63 carries the phosphoserine modification. In terms of domain architecture, Flavodoxin-like spans 80–224 (IIVFYGSQTG…DFITWREQFW (145 aa)). FMN is bound by residues 86 to 91 (SQTGTA), 138 to 141 (ATYG), 173 to 182 (LGNKTYEHFN), and Asp208. In terms of domain architecture, FAD-binding FR-type spans 279–521 (KNPFLAVVTT…YVRKSQFRLP (243 aa)). NADP(+) is bound at residue Arg298. FAD is bound by residues Arg424, 454–457 (RYYS), 472–474 (CAV), Tyr478, and 488–491 (GVAT). NADP(+) is bound by residues Thr535, 596-597 (SR), 602-606 (KVYVQ), and Asp639. Trp677 is a binding site for FAD.

This sequence belongs to the NADPH--cytochrome P450 reductase family. The protein in the N-terminal section; belongs to the flavodoxin family. It in the C-terminal section; belongs to the flavoprotein pyridine nucleotide cytochrome reductase family. FAD serves as cofactor. The cofactor is FMN.

It is found in the endoplasmic reticulum membrane. It carries out the reaction 2 oxidized [cytochrome P450] + NADPH = 2 reduced [cytochrome P450] + NADP(+) + H(+). Its function is as follows. This enzyme is required for electron transfer from NADP to cytochrome P450 in microsomes. It can also provide electron transfer to heme oxygenase and cytochrome B5. This chain is NADPH--cytochrome P450 reductase, found in Bos taurus (Bovine).